We begin with the raw amino-acid sequence, 915 residues long: Copper-exporting P-type ATPase (915 aa).

HMA domains are found at residues 11 to 72 (NHFA…YQGG) and 73 to 134 (TEQT…YQAI). 4 residues coordinate Cu(+): C22, C25, C84, and C87. The tract at residues 142 to 169 (FAPAASIDEKETDTPDAENSSNTEATEA) is disordered. Residues 158-169 (AENSSNTEATEA) are compositionally biased toward polar residues. In terms of domain architecture, HMA 3 spans 172 to 236 (QTLSLLIKGM…AIQSSGYQAE (65 aa)). Cu(+) contacts are provided by C183 and C186. Transmembrane regions (helical) follow at residues 265-285 (LGIA…NMMI), 293-313 (VWGG…RHFF), 329-349 (TLVA…VAWP), 359-379 (VYFE…YIET), 474-494 (LVIT…IQMV), 514-534 (VFVP…YLYG), and 541-561 (YMLV…LGLA). The active-site 4-aspartylphosphate intermediate is D598. Residues D796 and D800 each coordinate Mg(2+). Helical transmembrane passes span 801–821 (APAL…DVAI) and 865–885 (IPIA…PVVA).

Belongs to the cation transport ATPase (P-type) (TC 3.A.3) family. Type IB subfamily.

It is found in the cell membrane. It carries out the reaction Cu(+)(in) + ATP + H2O = Cu(+)(out) + ADP + phosphate + H(+). Involved in copper export. This Vibrio cholerae serotype O1 (strain ATCC 39315 / El Tor Inaba N16961) protein is Copper-exporting P-type ATPase (copA).